Reading from the N-terminus, the 1802-residue chain is Bromodomain and WD repeat-containing protein 3 (1802 aa).

8 WD repeats span residues 170–209 (IKMH…IWAT), 213–251 (RLLA…VWCL), 255–297 (APVA…FWQW), 307–347 (RPVK…IYYL), 353–393 (EKIA…IWQY), 400–452 (SIVL…VWNS), 456–495 (QLLH…IWDL), and 502–542 (RNYF…LFGF). 2 positions are modified to phosphoserine: Ser693 and Ser703. The tract at residues 768 to 910 (KPSYTTQRND…PKQTRKKKGG (143 aa)) is disordered. Residues 785-795 (SLRRTQRKRQH) are compositionally biased toward basic residues. Residues 796–817 (TYQTRSNIEHNSQASCQNSGVQ) are compositionally biased toward polar residues. A compositionally biased stretch (acidic residues) spans 818 to 829 (EDSDSSSEEDET). Positions 846–859 (SESSSSDSSSEYSD) are enriched in low complexity. Phosphoserine occurs at positions 885 and 886. A compositionally biased stretch (basic and acidic residues) spans 889-898 (ENLKSLEERQ). The segment covering 899 to 909 (KKPKQTRKKKG) has biased composition (basic residues). Residues 1138-1245 (WGAHSRDEEC…DVLLRFIGDQ (108 aa)) form the Bromo 1 domain. 4 disordered regions span residues 1262–1292 (RNST…VKCR), 1326–1361 (RQPA…LSED), 1438–1500 (IQSQ…SPVS), and 1520–1725 (SSSS…RAKR). Over residues 1266–1278 (DAEEDTEIVDLDS) the composition is skewed to acidic residues. The Bromo 2 domain occupies 1300–1430 (CNPDAWKKQC…ALFESHIKNI (131 aa)). Basic residues predominate over residues 1441–1453 (QKRRRPRYRKRLR). A compositionally biased stretch (low complexity) spans 1454-1468 (SSSSSLSSSGAPSPK). The span at 1479-1499 (KNDQNTSVSHARTSSPFSSPV) shows a compositional bias: polar residues. The segment covering 1520–1533 (SSSSFGGYSRSGNS) has biased composition (low complexity). 2 positions are modified to phosphoserine: Ser1577 and Ser1579. Over residues 1587–1600 (GEDKEKKETKEKSH) the composition is skewed to basic and acidic residues. The span at 1601-1626 (LSTSESGELGSSLSSESTCGSDSDSE) shows a compositional bias: low complexity. Basic and acidic residues predominate over residues 1627–1643 (STSRTDQDYVDGDHDYS). Composition is skewed to basic residues over residues 1649 to 1666 (RPKR…RNWK) and 1684 to 1697 (RGGR…RGSR). At Ser1763 the chain carries Phosphoserine.

Found in most adult tissues. Down-regulated in a majority of the B-CLL cases examined.

In terms of biological role, plays a role in the regulation of cell morphology and cytoskeletal organization. Required in the control of cell shape. In Homo sapiens (Human), this protein is Bromodomain and WD repeat-containing protein 3 (BRWD3).